We begin with the raw amino-acid sequence, 149 residues long: MASKSSCDLLLAAVLVSIFAAVAAVGSEDCTPWTATPITPLPSCRDYVEQQACRIETPGPPYLAKQQCCGELANIPQQCRCQALRFFMGRKSRPDQSGLMELPGCPREVQMDFVRILVTPGFCNLTTVHNTPYCLAMDEWQWNRQFCSS.

The signal sequence occupies residues methionine 1 to alanine 24. The N-linked (GlcNAc...) asparagine glycan is linked to asparagine 124.

This sequence belongs to the protease inhibitor I6 (cereal trypsin/alpha-amylase inhibitor) family. Heterotetramer of one CMa, one CMb and two CMd chains. In terms of processing, five disulfide bonds, which are essential for the inhibitor activity, are probably present. Exists both in a glycosylated and in an unglycosylated form. The glycosylated form is a potent allergen. In terms of tissue distribution, endosperm.

It is found in the secreted. In terms of biological role, part of a complex with inhibitory activity, but CMb is inactive as a separate subunit. This is Alpha-amylase/trypsin inhibitor CMb (IAT2) from Hordeum vulgare (Barley).